A 652-amino-acid polypeptide reads, in one-letter code: Inactive leucine-rich repeat receptor-like serine/threonine-protein kinase At1g60630 (652 aa).

The signal sequence occupies residues 1 to 23; sequence MISSSSCMFFLVFAFFLISPVRS. At 24 to 256 the chain is on the extracellular side; that stretch reads SDVEALLSLK…SRTKLIGIIS (233 aa). LRR repeat units lie at residues 64-84, 85-108, 109-132, 134-156, 158-178, and 179-203; these read SKLVLENLNLSGSLNGKSLNQ, LDQLRVLSFKGNSLSGSIPNLSGL, VNLKSLYLNDNNFSGEFPESLTSL, RLKTVVLSRNRFSGKIPSSLLRL, RLYTFYVQDNLFSGSIPPLNQ, and ATLRFFNVSNNQLSGHIPPTQALNR. Residues asparagine 72, asparagine 104, and asparagine 120 are each glycosylated (N-linked (GlcNAc...) asparagine). N-linked (GlcNAc...) asparagine glycosylation is found at asparagine 185, asparagine 205, and asparagine 225. A helical membrane pass occupies residues 257 to 277; that stretch reads GSICGGILILLLTFLLICLLW. Residues 278–652 lie on the Cytoplasmic side of the membrane; that stretch reads RRKRSKSKRE…SLPREDHMSI (375 aa). Positions 286-321 are disordered; sequence REERRSKRVAESKEAKTAETEEGTSDQKNKRFSWEK. In terms of domain architecture, Protein kinase spans 350–624; it reads KASAETLGRG…VKDARAEAAL (275 aa). Serine 352 carries the phosphoserine modification. ATP contacts are provided by residues 356–364 and lysine 378; that span reads LGRGTLGST. A phosphoserine mark is found at serine 430 and serine 433. Threonine 509 carries the phosphothreonine modification. The segment at 630–652 is disordered; that stretch reads SDHSPGRWSDTIQSLPREDHMSI.

It belongs to the protein kinase superfamily. Ser/Thr protein kinase family.

The protein localises to the cell membrane. This is Inactive leucine-rich repeat receptor-like serine/threonine-protein kinase At1g60630 from Arabidopsis thaliana (Mouse-ear cress).